Here is a 406-residue protein sequence, read N- to C-terminus: Phosphopentomutase (406 aa).

Residues aspartate 10, aspartate 305, histidine 310, aspartate 346, histidine 347, and histidine 358 each contribute to the Mn(2+) site.

It belongs to the phosphopentomutase family. Mn(2+) is required as a cofactor.

The protein resides in the cytoplasm. The catalysed reaction is 2-deoxy-alpha-D-ribose 1-phosphate = 2-deoxy-D-ribose 5-phosphate. It catalyses the reaction alpha-D-ribose 1-phosphate = D-ribose 5-phosphate. Its pathway is carbohydrate degradation; 2-deoxy-D-ribose 1-phosphate degradation; D-glyceraldehyde 3-phosphate and acetaldehyde from 2-deoxy-alpha-D-ribose 1-phosphate: step 1/2. Isomerase that catalyzes the conversion of deoxy-ribose 1-phosphate (dRib-1-P) and ribose 1-phosphate (Rib-1-P) to deoxy-ribose 5-phosphate (dRib-5-P) and ribose 5-phosphate (Rib-5-P), respectively. The sequence is that of Phosphopentomutase from Allorhizobium ampelinum (strain ATCC BAA-846 / DSM 112012 / S4) (Agrobacterium vitis (strain S4)).